The primary structure comprises 878 residues: Vacuolar membrane protease (878 aa).

Topologically, residues methionine 1–arginine 16 are cytoplasmic. A helical transmembrane segment spans residues tryptophan 17–valine 37. Residues histidine 38–threonine 390 lie on the Vacuolar side of the membrane. N-linked (GlcNAc...) asparagine glycosylation is found at asparagine 53 and asparagine 119. Residues histidine 174 and aspartate 186 each coordinate Zn(2+). Glutamate 220 functions as the Proton acceptor in the catalytic mechanism. The Zn(2+) site is built by glutamate 221, glutamate 246, and histidine 319. The helical transmembrane segment at leucine 391 to isoleucine 411 threads the bilayer. Residues alanine 412–glycine 442 lie on the Cytoplasmic side of the membrane. Residues phenylalanine 443 to leucine 463 traverse the membrane as a helical segment. Topologically, residues valine 464–histidine 473 are vacuolar. A helical membrane pass occupies residues serine 474–valine 494. Topologically, residues serine 495–arginine 508 are cytoplasmic. Residues isoleucine 509–tyrosine 529 traverse the membrane as a helical segment. The Vacuolar portion of the chain corresponds to alanine 530 to arginine 533. Residues glycine 534–isoleucine 554 form a helical membrane-spanning segment. Residues serine 555–glutamine 659 lie on the Cytoplasmic side of the membrane. Residues glycine 577–serine 590 show a composition bias toward low complexity. The interval glycine 577 to serine 611 is disordered. A compositionally biased stretch (acidic residues) spans glycine 591–threonine 603. The helical transmembrane segment at leucine 660–serine 680 threads the bilayer. The Vacuolar portion of the chain corresponds to alanine 681–leucine 693. The helical transmembrane segment at phenylalanine 694 to isoleucine 714 threads the bilayer. Residues histidine 715–valine 721 are Cytoplasmic-facing. Residues proline 722–phenylalanine 742 form a helical membrane-spanning segment. Topologically, residues serine 743–aspartate 878 are vacuolar.

It belongs to the peptidase M28 family. Requires Zn(2+) as cofactor.

The protein resides in the vacuole membrane. Its function is as follows. May be involved in vacuolar sorting and osmoregulation. This Aspergillus flavus (strain ATCC 200026 / FGSC A1120 / IAM 13836 / NRRL 3357 / JCM 12722 / SRRC 167) protein is Vacuolar membrane protease.